A 407-amino-acid chain; its full sequence is O-methyltransferase verK (407 aa).

S-adenosyl-L-methionine-binding positions include glutamate 263 and 295–297 (GDF). Histidine 314 serves as the catalytic Proton acceptor.

Belongs to the class I-like SAM-binding methyltransferase superfamily. Cation-independent O-methyltransferase family.

It participates in mycotoxin biosynthesis. Its function is as follows. O-methyltransferase; part of the gene cluster that mediates the biosynthesis of 11'-deoxyverticillin A, one of the dimeric epipolythiodioxopiperazines (ETPs) from the verticillin family that act as mycotoxins. 11'-deoxyverticillin A is required for normal conidiation. The nonribosomal peptide synthetase verP is speculated to be responsible for condensation of amino acids to form the carbon skeleton of verticillin, whereas the cluster-specific tailoring enzymes are involved in further modifications leading to the production of 11'-deoxyverticillin A. The chain is O-methyltransferase verK from Clonostachys rogersoniana.